The following is a 152-amino-acid chain: Large ribosomal subunit protein uL15 (152 aa).

The segment at 1–54 (MGLKLNELSPGVGAKKTAHRKGRGIGSGLGKTGGRGVKGQKSRSGSGVRRGFEG) is disordered. The span at 24–37 (GIGSGLGKTGGRGV) shows a compositional bias: gly residues.

It belongs to the universal ribosomal protein uL15 family. Part of the 50S ribosomal subunit.

Functionally, binds to the 23S rRNA. This chain is Large ribosomal subunit protein uL15, found in Psychrobacter sp. (strain PRwf-1).